A 153-amino-acid chain; its full sequence is Coiled-coil-helix-coiled-coil-helix domain-containing protein 2 (153 aa).

2 disordered regions span residues 1-51 and 78-106; these read MPRG…AAPR and HAITGGFSGGGSAEPAKPDITYQEPQGAQ. Positions 14 to 51 are enriched in low complexity; sequence PPASRAPQMRAAPRRAPAAQPPAAAAPSAVGSPAAAPR. In terms of domain architecture, CHCH spans 113–153; the sequence is FGPCSLEIKQFLECAQNQSDVKLCEGFNEVLRQCRIANGLM. 2 short sequence motifs (cx9C motif) span residues 116–126 and 136–146; these read CSLEIKQFLEC and CEGFNEVLRQC. Intrachain disulfides connect C116/C146 and C126/C136.

Interacts with RBPJ.

It localises to the nucleus. Its subcellular location is the mitochondrion. The protein localises to the mitochondrion intermembrane space. Functionally, transcription factor. Binds to the oxygen responsive element of COX4I2 and activates its transcription under hypoxia conditions (4% oxygen), as well as normoxia conditions (20% oxygen). The protein is Coiled-coil-helix-coiled-coil-helix domain-containing protein 2 (Chchd2) of Mus musculus (Mouse).